A 303-amino-acid polypeptide reads, in one-letter code: UDP-3-O-acyl-N-acetylglucosamine deacetylase (303 aa).

Residues His78, His237, and Asp241 each coordinate Zn(2+). The Proton donor role is filled by His264.

It belongs to the LpxC family. Zn(2+) is required as a cofactor.

The catalysed reaction is a UDP-3-O-[(3R)-3-hydroxyacyl]-N-acetyl-alpha-D-glucosamine + H2O = a UDP-3-O-[(3R)-3-hydroxyacyl]-alpha-D-glucosamine + acetate. Its pathway is glycolipid biosynthesis; lipid IV(A) biosynthesis; lipid IV(A) from (3R)-3-hydroxytetradecanoyl-[acyl-carrier-protein] and UDP-N-acetyl-alpha-D-glucosamine: step 2/6. Catalyzes the hydrolysis of UDP-3-O-myristoyl-N-acetylglucosamine to form UDP-3-O-myristoylglucosamine and acetate, the committed step in lipid A biosynthesis. In Xanthomonas oryzae pv. oryzae (strain MAFF 311018), this protein is UDP-3-O-acyl-N-acetylglucosamine deacetylase.